The sequence spans 387 residues: Alanine racemase (387 aa).

K48 functions as the Proton acceptor; specific for D-alanine in the catalytic mechanism. K48 bears the N6-(pyridoxal phosphate)lysine mark. Residue R146 coordinates substrate. The Proton acceptor; specific for L-alanine role is filled by Y267. Residue M315 coordinates substrate.

This sequence belongs to the alanine racemase family. Pyridoxal 5'-phosphate is required as a cofactor.

It catalyses the reaction L-alanine = D-alanine. The protein operates within amino-acid biosynthesis; D-alanine biosynthesis; D-alanine from L-alanine: step 1/1. Functionally, catalyzes the interconversion of L-alanine and D-alanine. May also act on other amino acids. This chain is Alanine racemase (alr), found in Methylacidiphilum infernorum (isolate V4) (Methylokorus infernorum (strain V4)).